We begin with the raw amino-acid sequence, 395 residues long: Phosphoprotein (395 aa).

2 disordered regions span residues 31-109 and 126-214; these read VETV…DTQL and NKSS…PASV. Over residues 65-74 the composition is skewed to basic and acidic residues; it reads TPDRQNRSDK. 3 stretches are compositionally biased toward polar residues: residues 75-98, 146-168, and 203-212; these read QPST…QPPT, LPTQ…QNRA, and SGQSQDNTPA. Residues 222–285 form a multimerization region; the sequence is DFVQAMMSMM…LGMMKILDPG (64 aa).

Belongs to the rubulavirus/avulavirus P protein family. As to quaternary structure, homotetramer. Interacts (via multimerization domain) with polymerase L; this interaction forms the polymerase L-P complex. Interacts (via N-terminus) with N0 (via Ncore); this interaction allows P to chaperon N0 to avoid N polymerization before encapsidation. Interacts (via C-terminus) with N-RNA template; this interaction positions the polymerase on the template for both transcription and replication.

Its function is as follows. Essential cofactor of the RNA polymerase L that plays a central role in the transcription and replication by forming the polymerase complex with RNA polymerase L and recruiting L to the genomic N-RNA template for RNA synthesis. Also plays a central role in the encapsidation of nascent RNA chains by forming the encapsidation complex with the nucleocapsid protein N (N-P complex). Acts as a chaperone for newly synthesized free N protein, so-called N0, allowing encapsidation of nascent RNA chains during replication. The nucleoprotein protein N prevents excessive phosphorylation of P, which leads to down-regulation of viral transcription/ replication. Participates, together with N, in the formation of viral factories (viroplasms), which are large inclusions in the host cytoplasm where replication takes place. The polypeptide is Phosphoprotein (P/C) (Gallus gallus (Chicken)).